A 442-amino-acid chain; its full sequence is Probable serine/threonine-protein kinase kinase DDB_G0280643 (442 aa).

Positions 74 to 398 (IDPNTIVDCG…VNEILESPYF (325 aa)) constitute a Protein kinase domain. ATP contacts are provided by residues 80-88 (VDCGTNGIM) and K103. The active-site Proton acceptor is the D231.

It belongs to the protein kinase superfamily. CMGC Ser/Thr protein kinase family. MAP kinase subfamily.

The enzyme catalyses L-seryl-[protein] + ATP = O-phospho-L-seryl-[protein] + ADP + H(+). It carries out the reaction L-threonyl-[protein] + ATP = O-phospho-L-threonyl-[protein] + ADP + H(+). This Dictyostelium discoideum (Social amoeba) protein is Probable serine/threonine-protein kinase kinase DDB_G0280643.